The chain runs to 662 residues: ABC transporter G family member 17 (662 aa).

The 255-residue stretch at 22 to 276 (LAFNDLTYNV…FSEFGSPIPE (255 aa)) folds into the ABC transporter domain. An ATP-binding site is contributed by 69–76 (GASGAGKS). Positions 356-566 (VETVILAKRY…PYEAVLHNEF (211 aa)) constitute an ABC transmembrane type-2 domain. 6 helical membrane-spanning segments follow: residues 375-395 (LIGT…TVYW), 410-430 (FFSF…PAFI), 451-471 (VISH…GFAA), 486-508 (FIYY…TFVS), 514-536 (VMMS…GFYV), and 635-655 (LWVT…SLLL).

It belongs to the ABC transporter superfamily. ABCG family. Eye pigment precursor importer (TC 3.A.1.204) subfamily.

The protein localises to the membrane. This is ABC transporter G family member 17 (ABCG17) from Arabidopsis thaliana (Mouse-ear cress).